The sequence spans 66 residues: Large ribosomal subunit protein bL32 (66 aa).

Belongs to the bacterial ribosomal protein bL32 family.

This is Large ribosomal subunit protein bL32 from Rickettsia akari (strain Hartford).